A 95-amino-acid polypeptide reads, in one-letter code: Integration host factor subunit beta (95 aa).

Positions 59-95 (RVGRNPKTGQSVRLDGKFVPHFKPGKELRDRVNEDES) are disordered. Basic and acidic residues predominate over residues 72 to 95 (LDGKFVPHFKPGKELRDRVNEDES).

It belongs to the bacterial histone-like protein family. In terms of assembly, heterodimer of an alpha and a beta chain.

In terms of biological role, this protein is one of the two subunits of integration host factor, a specific DNA-binding protein that functions in genetic recombination as well as in transcriptional and translational control. This Ectopseudomonas mendocina (strain ymp) (Pseudomonas mendocina) protein is Integration host factor subunit beta.